The primary structure comprises 105 residues: Early nodulin-93 (105 aa).

A helical transmembrane segment spans residues 66 to 83; the sequence is TAQALIISTATAAAYFIV.

It localises to the membrane. In Glycine max (Soybean), this protein is Early nodulin-93.